We begin with the raw amino-acid sequence, 743 residues long: Sulfhydryl oxidase 1 (743 aa).

A signal peptide spans Met1–Ser42. Residues Arg43–Glu166 form the Thioredoxin domain. Active-site nucleophile residues include Cys80 and Cys83. 2 disulfide bridges follow: Cys80/Cys83 and Cys111/Cys120. Asn254, Asn288, Asn295, Asn371, and Asn401 each carry an N-linked (GlcNAc...) asparagine glycan. A disulfide bridge connects residues Cys407 and Cys419. The ERV/ALR sulfhydryl oxidase domain occupies Ser410–Trp513. Residues Arg415, Trp422, His426, Glu461, His465, Trp488–Asn495, Lys510, and Trp513 contribute to the FAD site. Cysteines 459 and 462 form a disulfide. Cys519 and Cys522 form a disulfide bridge. Positions Ala567–Ile617 are disordered. The segment covering Glu580–Lys593 has biased composition (acidic residues). Over residues Glu594–Thr604 the composition is skewed to basic and acidic residues. A helical transmembrane segment spans residues Ser707 to Phe727.

This sequence belongs to the quiescin-sulfhydryl oxidase (QSOX) family. Requires FAD as cofactor. N-glycosylated. O-glycosylated on Thr and Ser residues.

The protein resides in the golgi apparatus membrane. The protein localises to the secreted. The catalysed reaction is 2 R'C(R)SH + O2 = R'C(R)S-S(R)CR' + H2O2. In terms of biological role, catalyzes the oxidation of sulfhydryl groups in peptide and protein thiols to disulfides with the reduction of oxygen to hydrogen peroxide. Plays a role in disulfide bond formation in a variety of extracellular proteins. In fibroblasts, required for normal incorporation of laminin into the extracellular matrix, and thereby for normal cell-cell adhesion and cell migration. This chain is Sulfhydryl oxidase 1 (QSOX1), found in Gallus gallus (Chicken).